The following is a 160-amino-acid chain: SsrA-binding protein (160 aa).

The protein belongs to the SmpB family.

It is found in the cytoplasm. Its function is as follows. Required for rescue of stalled ribosomes mediated by trans-translation. Binds to transfer-messenger RNA (tmRNA), required for stable association of tmRNA with ribosomes. tmRNA and SmpB together mimic tRNA shape, replacing the anticodon stem-loop with SmpB. tmRNA is encoded by the ssrA gene; the 2 termini fold to resemble tRNA(Ala) and it encodes a 'tag peptide', a short internal open reading frame. During trans-translation Ala-aminoacylated tmRNA acts like a tRNA, entering the A-site of stalled ribosomes, displacing the stalled mRNA. The ribosome then switches to translate the ORF on the tmRNA; the nascent peptide is terminated with the 'tag peptide' encoded by the tmRNA and targeted for degradation. The ribosome is freed to recommence translation, which seems to be the essential function of trans-translation. This Nocardia farcinica (strain IFM 10152) protein is SsrA-binding protein.